We begin with the raw amino-acid sequence, 498 residues long: Type II secretion system protein E (498 aa).

261–268 (GPTGSGKS) is a binding site for ATP. The Zn(2+) site is built by Cys-394, Cys-397, Cys-425, and Cys-428.

It belongs to the GSP E family. Forms homooligomers; most probably hexamers. Interacts with OutL/GspL. The cofactor is Zn(2+).

Its subcellular location is the cell inner membrane. It catalyses the reaction ATP + H2O + cellular proteinSide 1 = ADP + phosphate + cellular proteinSide 2.. ATPase component of the type II secretion system required for the energy-dependent secretion of extracellular factors such as proteases and toxins from the periplasm. Acts as a molecular motor to provide the energy that is required for assembly of the pseudopilus and the extrusion of substrates generated in the cytoplasm. This is Type II secretion system protein E (outE) from Pectobacterium carotovorum subsp. carotovorum (Erwinia carotovora subsp. carotovora).